Consider the following 399-residue polypeptide: Zinc finger TRAF-type-containing protein 1 (399 aa).

Residues 1–13 (MSGAEEAGGGGPA) are compositionally biased toward gly residues. The segment at 1–20 (MSGAEEAGGGGPAAGPAGAV) is disordered. Residues 106-151 (CTVCLDLPKASVYQCTNGHLMCAGCFIHLLADARLKEEQATCPNCR) form an RING-type; degenerate zinc finger. The TRAF-type zinc finger occupies 152 to 210 (CEISKSLCCRNLAVEKAVSELPSECGFCLRQFPRSLLERHQKEECQDRVTQCKYKRIGC).

Belongs to the ZFTRAF1 family. As to quaternary structure, interacts with LGALS3.

Its subcellular location is the cytoplasm. The protein localises to the perinuclear region. The chain is Zinc finger TRAF-type-containing protein 1 from Rattus norvegicus (Rat).